Reading from the N-terminus, the 490-residue chain is Glutamate--tRNA ligase (490 aa).

Positions 10–20 match the 'HIGH' region motif; sequence PSPTGSLHIGG. A 'KMSKS' region motif is present at residues 251 to 255; sequence KLSKR. Lys254 is an ATP binding site.

The protein belongs to the class-I aminoacyl-tRNA synthetase family. Glutamate--tRNA ligase type 1 subfamily. As to quaternary structure, monomer.

The protein localises to the cytoplasm. The enzyme catalyses tRNA(Glu) + L-glutamate + ATP = L-glutamyl-tRNA(Glu) + AMP + diphosphate. Functionally, catalyzes the attachment of glutamate to tRNA(Glu) in a two-step reaction: glutamate is first activated by ATP to form Glu-AMP and then transferred to the acceptor end of tRNA(Glu). The polypeptide is Glutamate--tRNA ligase (Moorella thermoacetica (strain ATCC 39073 / JCM 9320)).